The chain runs to 142 residues: Small ribosomal subunit protein uS12 (142 aa).

The protein belongs to the universal ribosomal protein uS12 family. Part of the 30S ribosomal subunit.

With S4 and S5 plays an important role in translational accuracy. Located at the interface of the 30S and 50S subunits. This chain is Small ribosomal subunit protein uS12, found in Methanothrix thermoacetophila (strain DSM 6194 / JCM 14653 / NBRC 101360 / PT) (Methanosaeta thermophila).